A 271-amino-acid polypeptide reads, in one-letter code: Shikimate dehydrogenase (NADP(+)) (271 aa).

Residues 16–18 (SRS) and threonine 63 each bind shikimate. Residue lysine 67 is the Proton acceptor of the active site. Residues asparagine 88 and aspartate 104 each contribute to the shikimate site. NADP(+)-binding positions include 128–132 (GAGGA), 152–157 (NRTASK), and methionine 215. Tyrosine 217 provides a ligand contact to shikimate. Glycine 238 serves as a coordination point for NADP(+).

Belongs to the shikimate dehydrogenase family. As to quaternary structure, homodimer.

The catalysed reaction is shikimate + NADP(+) = 3-dehydroshikimate + NADPH + H(+). It participates in metabolic intermediate biosynthesis; chorismate biosynthesis; chorismate from D-erythrose 4-phosphate and phosphoenolpyruvate: step 4/7. Its function is as follows. Involved in the biosynthesis of the chorismate, which leads to the biosynthesis of aromatic amino acids. Catalyzes the reversible NADPH linked reduction of 3-dehydroshikimate (DHSA) to yield shikimate (SA). This Chromohalobacter salexigens (strain ATCC BAA-138 / DSM 3043 / CIP 106854 / NCIMB 13768 / 1H11) protein is Shikimate dehydrogenase (NADP(+)).